The sequence spans 30 residues: MDPAGPDNDERFTYDYYRLRVVGLIVAAVL.

The protein belongs to the FXYD family. Post-translationally, phosphorylated by protein kinase a (PK-A) and protein kinase C (PK-C). Phosphorylated in response to insulin and adrenergic stimulation.

It is found in the microsome membrane. The protein localises to the endoplasmic reticulum membrane. Induces a hyperpolarization-activated chloride current when expressed in Xenopus oocytes. May have a functional role in muscle contraction. This chain is Phospholemman-like protein, found in Squalus acanthias (Spiny dogfish).